The primary structure comprises 298 residues: NFU1 iron-sulfur cluster scaffold homolog, mitochondrial (298 aa).

Residues 190-258 (IKELLDTRIR…IPEVESVEQV (69 aa)) form a nifU region. Residues C227 and C230 each contribute to the [4Fe-4S] cluster site. Positions 279 to 288 (QKESVNQPNA) are enriched in polar residues. The disordered stretch occupies residues 279 to 298 (QKESVNQPNAPVNIGGGTPN).

It belongs to the NifU family.

It localises to the mitochondrion. Molecular scaffold for [Fe-S] cluster assembly of mitochondrial iron-sulfur proteins. The protein is NFU1 iron-sulfur cluster scaffold homolog, mitochondrial of Drosophila virilis (Fruit fly).